Reading from the N-terminus, the 300-residue chain is B1 kinase (300 aa).

In terms of domain architecture, Protein kinase spans 16-282; the sequence is WVVGPLIGKG…ITMVNSLTYF (267 aa). ATP is bound by residues 22 to 30 and K45; that span reads IGKGGFGSI. Residue D147 is the Proton acceptor of the active site.

Belongs to the protein kinase superfamily. Ser/Thr protein kinase family. Poxviruses subfamily. In terms of assembly, interacts with host JIP1; this interaction increases the amount of MAPK bound to JIP1 and subsequently increases the activity of transcription factors, such as JUN, that respond to these complexes. Interacts with protein OPG198; this interaction inhibits the repressive activity of OPG198 pseudokinase on viral replication factory formation. Mg(2+) serves as cofactor. Post-translationally, autophosphorylated.

It is found in the virion. Its subcellular location is the host cytoplasm. The catalysed reaction is L-seryl-[protein] + ATP = O-phospho-L-seryl-[protein] + ADP + H(+). It carries out the reaction L-threonyl-[protein] + ATP = O-phospho-L-threonyl-[protein] + ADP + H(+). In terms of biological role, essential serine/threonine-protein kinase that plays different role in the viral life cycle. Phosphorylates the host small ribosomal protein RACK1 thereby customizing the ribosomes to a state optimal for viral mRNAs (which contain poly-A leaders) but not for host mRNAs. Facilitates viral DNA replication by inhibiting host BANF1, a cellular host defense responsive to foreign DNA. Phosphorylates host BANF1 on serine and threonine residues; this leads to BANF1 relocalization to the cytoplasm, loss of dimerization and impaired DNA binding activity. Indeed, BANF1 activity depends on its DNA-binding property which is blocked by VPK1-mediated phosphorylation. Required for viral intermediate genes expression, probably by inhibiting host BANF1. Modulates cellular responses via host JUN by two different mechanisms, either by direct phosphorylation or by modulation of upstream JIP1-MAPK complexes. Seems to participate in the accumulation/processing of late proteins and thus in virion maturation. In addition, inhibits B12 repressive activity on viral DNA replication via a phosphorylation-dependent mechanism. This chain is B1 kinase (OPG187), found in Vaccinia virus (strain Ankara) (VACV).